The sequence spans 104 residues: Large ribosomal subunit protein uL24 (104 aa).

A disordered region spans residues 82-104 (RVGYRFDENGKKVRVSRRNGKDI). A compositionally biased stretch (basic residues) spans 93-104 (KVRVSRRNGKDI).

This sequence belongs to the universal ribosomal protein uL24 family. Part of the 50S ribosomal subunit.

One of two assembly initiator proteins, it binds directly to the 5'-end of the 23S rRNA, where it nucleates assembly of the 50S subunit. In terms of biological role, one of the proteins that surrounds the polypeptide exit tunnel on the outside of the subunit. In Corynebacterium glutamicum (strain R), this protein is Large ribosomal subunit protein uL24.